We begin with the raw amino-acid sequence, 380 residues long: Methylthioribose-1-phosphate isomerase (380 aa).

Aspartate 257 (proton donor) is an active-site residue.

Belongs to the eIF-2B alpha/beta/delta subunits family. MtnA subfamily.

It localises to the cytoplasm. It is found in the nucleus. The enzyme catalyses 5-(methylsulfanyl)-alpha-D-ribose 1-phosphate = 5-(methylsulfanyl)-D-ribulose 1-phosphate. The protein operates within amino-acid biosynthesis; L-methionine biosynthesis via salvage pathway; L-methionine from S-methyl-5-thio-alpha-D-ribose 1-phosphate: step 1/6. Functionally, catalyzes the interconversion of methylthioribose-1-phosphate (MTR-1-P) into methylthioribulose-1-phosphate (MTRu-1-P). The polypeptide is Methylthioribose-1-phosphate isomerase (Naegleria gruberi (Amoeba)).